The following is a 233-amino-acid chain: Movement and silencing protein TGBp1 (233 aa).

The region spanning 1–134 is the (+)RNA virus helicase ATP-binding domain; that stretch reads MDCKYLLELL…ALLNGIFGCQ (134 aa). A (+)RNA virus helicase C-terminal domain is found at 135–233; it reads IKSRREDLCH…EFDAWSHATC (99 aa).

It belongs to the Tymovirales TGBp1 protein family. As to quaternary structure, homodimer and homooligomer. Interacts with capsid protein. Interacts with host AGO1; this interaction targets the host protein for degradation, thereby suppressing the antiviral RNA silencing.

It localises to the host cytoplasm. Its function is as follows. Transports viral genome to neighboring plant cells directly through plasmosdesmata, without any budding. The movement protein allows efficient cell to cell propagation, by bypassing the host cell wall barrier. Increases plasmodesma size exclusion limit. Acts as a suppressor of RNA-mediated gene silencing, also known as post-transcriptional gene silencing (PTGS), a mechanism of plant viral defense that limits the accumulation of viral RNAs. This Narcissus mosaic virus (NMV) protein is Movement and silencing protein TGBp1.